We begin with the raw amino-acid sequence, 209 residues long: Ribosomal RNA large subunit methyltransferase E (209 aa).

Residues G63, W65, D83, D99, and D124 each contribute to the S-adenosyl-L-methionine site. K164 serves as the catalytic Proton acceptor.

It belongs to the class I-like SAM-binding methyltransferase superfamily. RNA methyltransferase RlmE family.

It is found in the cytoplasm. The catalysed reaction is uridine(2552) in 23S rRNA + S-adenosyl-L-methionine = 2'-O-methyluridine(2552) in 23S rRNA + S-adenosyl-L-homocysteine + H(+). Functionally, specifically methylates the uridine in position 2552 of 23S rRNA at the 2'-O position of the ribose in the fully assembled 50S ribosomal subunit. The sequence is that of Ribosomal RNA large subunit methyltransferase E from Yersinia enterocolitica serotype O:8 / biotype 1B (strain NCTC 13174 / 8081).